A 314-amino-acid chain; its full sequence is Ketimine reductase mu-crystallin (314 aa).

A 3,3',5-triiodo-L-thyronine-binding site is contributed by Arg-47. NADPH contacts are provided by Ser-91, His-92, Arg-119, Ala-144, Val-146, Gln-147, Asn-168, Arg-169, Thr-170, Asn-173, Thr-205, Met-206, and Val-226. Residue Glu-257 participates in 3,3',5-triiodo-L-thyronine binding. Ser-292 contributes to the NADPH binding site.

Belongs to the ornithine cyclodeaminase/mu-crystallin family. As to quaternary structure, homodimer. Binds the thyroid hormone triiodothyronine (T3); T3 binding inhibits enzymatic activity. Expressed at high abundance in lens, but outside the lens it is preferentially expressed in neural tissues, retina and brain.

The protein resides in the cytoplasm. It carries out the reaction L-pipecolate + NADP(+) = Delta(1)-piperideine-2-carboxylate + NADPH + H(+). It catalyses the reaction L-pipecolate + NAD(+) = Delta(1)-piperideine-2-carboxylate + NADH + H(+). The catalysed reaction is L-proline + NADP(+) = 1-pyrroline-2-carboxylate + NADPH + H(+). The enzyme catalyses L-proline + NAD(+) = 1-pyrroline-2-carboxylate + NADH + H(+). It carries out the reaction (3R)-1,4-thiomorpholine-3-carboxylate + NAD(+) = 3,4-dehydrothiomorpholine-3-carboxylate + NADH + 2 H(+). It catalyses the reaction (3R)-1,4-thiomorpholine-3-carboxylate + NADP(+) = 3,4-dehydrothiomorpholine-3-carboxylate + NADPH + 2 H(+). The catalysed reaction is (S)-cystathionine ketimine + NADH + 2 H(+) = (3R,5S)-2,3,5,6,7-pentahydro-1,4-thiazepine-3,5-dicarboxylate + NAD(+). The enzyme catalyses (S)-cystathionine ketimine + NADPH + 2 H(+) = (3R,5S)-2,3,5,6,7-pentahydro-1,4-thiazepine-3,5-dicarboxylate + NADP(+). It carries out the reaction (R)-lanthionine ketimine + NADPH + 2 H(+) = (3R,5R)-1,4-thiomorpholine-3,5-dicarboxylate + NADP(+). It catalyses the reaction Delta(2)-thiazoline-2-carboxylate + NADPH + 2 H(+) = L-thiazolidine-2-carboxylate + NADP(+). Catalyzes the NAD(P)H-dependent reduction of imine double bonds of a number of cyclic ketimine substrates, including sulfur-containing cyclic ketimines. Under physiological conditions, it efficiently catalyzes delta(1)-piperideine-2-carboxylate (P2C) and delta(1)-pyrroline-2-carboxylate (Pyr2C) reduction, suggesting a central role in lysine and glutamate metabolism. Additional substrates are delta(2)-thiazoline-2-carboxylate (T2C), 3,4-dehydrothiomorpholine-3-carboxylate (AECK), and (R)-lanthionine ketimine (LK) that is reduced at very low rate compared to other substrates. Also catalyzes the NAD(P)H-dependent reduction of (S)-cystathionine ketimine (CysK). The chain is Ketimine reductase mu-crystallin (CRYM) from Macropus fuliginosus (Western gray kangaroo).